A 210-amino-acid chain; its full sequence is Small ribosomal subunit protein uS3 (210 aa).

The region spanning 38–106 (IRAWLKKRLA…EVQINIVEIR (69 aa)) is the KH type-2 domain.

The protein belongs to the universal ribosomal protein uS3 family. In terms of assembly, part of the 30S ribosomal subunit. Forms a tight complex with proteins S10 and S14.

Functionally, binds the lower part of the 30S subunit head. Binds mRNA in the 70S ribosome, positioning it for translation. In Magnetococcus marinus (strain ATCC BAA-1437 / JCM 17883 / MC-1), this protein is Small ribosomal subunit protein uS3.